A 237-amino-acid chain; its full sequence is Uridylate kinase (237 aa).

Position 12 to 15 (12 to 15 (KLSG)) interacts with ATP. The interval 20–25 (GDEGFG) is involved in allosteric activation by GTP. Glycine 54 contacts UMP. Residues glycine 55 and arginine 59 each contribute to the ATP site. UMP is bound by residues aspartate 74 and 135–142 (TGSPFFTT). ATP is bound by residues threonine 162, tyrosine 168, and aspartate 171.

It belongs to the UMP kinase family. As to quaternary structure, homohexamer.

It is found in the cytoplasm. The enzyme catalyses UMP + ATP = UDP + ADP. It participates in pyrimidine metabolism; CTP biosynthesis via de novo pathway; UDP from UMP (UMPK route): step 1/1. Its activity is regulated as follows. Allosterically activated by GTP. Inhibited by UTP. Catalyzes the reversible phosphorylation of UMP to UDP. This Actinobacillus pleuropneumoniae serotype 5b (strain L20) protein is Uridylate kinase.